A 510-amino-acid polypeptide reads, in one-letter code: MFIESFKVESPNVKYTENEIHSVYDYETTEVVHENVNGAYQWIVKPKVVKYDFKTDTRVPKLGVMLVGWGGNNGSTLTAGVIANKEGISWATKDKVQQANYFGSLTQASSIRVGSFNGEEMYAPFKSLVPMVNPDDVVFGGWDISDMNLADAMGRAKVLDIDLQKQLRPYMENIVPLPGIYDPDFIAANQGSRANNVIKGTKKEQVDQIIKDMREFKEKNKVDKVVVLWTANTERYSNVIVGLNDTMENLMNSVDRDESEISPSTLYAIACVLEGIPFINGSPQNTFVPGLIDLAIKNNVLIGGDDFKSGQTKMKSVLVDFLVGAGIKPTSIVSYNHLGNNDGMNLSAPQTFRSKEISKSNVVDDMVASNGILFEPGEHPDHVVVIKYVPYVADSKRAMDEYTSEIFMGGKNTIVMHNTCEDSLLAAPIILDLVLLAEISTRIQFKSEKEGKFHSFHPVATKLSYLTKAPLVPPGTPVVNALSKQRAMLENILRACVGLAPENNMILEYK.

NAD(+) contacts are provided by Gly70, Gly71, Asn72, Asn73, Asp143, Ile180, Gln190, Arg193, Thr230, Ala231, Asn232, Thr233, Gly281, Ser282, Asp306, Ser309, Asn340, Asn341, Asp342, Lys355, Ala393, Asp394, Asp422, and Ser423.

The protein belongs to the myo-inositol 1-phosphate synthase family. It depends on NAD(+) as a cofactor.

It is found in the cytoplasm. Its subcellular location is the cytosol. The protein localises to the nucleus. The catalysed reaction is D-glucose 6-phosphate = 1D-myo-inositol 3-phosphate. It functions in the pathway polyol metabolism; myo-inositol biosynthesis; myo-inositol from D-glucose 6-phosphate: step 1/2. Its function is as follows. Key enzyme in myo-inositol biosynthesis pathway that catalyzes the conversion of glucose 6-phosphate to 1-myo-inositol 1-phosphate in a NAD-dependent manner. The protein is Inositol-3-phosphate synthase of Brassica napus (Rape).